The sequence spans 347 residues: NADH-ubiquinone oxidoreductase chain 2 (347 aa).

The next 11 helical transmembrane spans lie at Met-1–Thr-21, His-25–Met-45, Tyr-59–Val-79, Ile-96–Pro-116, Gly-127–Pro-147, Ile-149–Gly-169, Ile-178–Pro-198, Thr-201–Leu-221, Leu-240–Phe-260, Asp-274–Met-294, and Ile-326–Leu-346.

This sequence belongs to the complex I subunit 2 family. Core subunit of respiratory chain NADH dehydrogenase (Complex I) which is composed of 45 different subunits. Interacts with TMEM242.

It localises to the mitochondrion inner membrane. The enzyme catalyses a ubiquinone + NADH + 5 H(+)(in) = a ubiquinol + NAD(+) + 4 H(+)(out). Functionally, core subunit of the mitochondrial membrane respiratory chain NADH dehydrogenase (Complex I) which catalyzes electron transfer from NADH through the respiratory chain, using ubiquinone as an electron acceptor. Essential for the catalytic activity and assembly of complex I. This is NADH-ubiquinone oxidoreductase chain 2 from Dobsonia minor (Lesser bare-backed fruit bat).